Consider the following 232-residue polypeptide: Transcriptional regulatory protein CpxR (232 aa).

Positions 3–115 (KILLVDDDRE…ELVARIRAIL (113 aa)) constitute a Response regulatory domain. 4-aspartylphosphate is present on Asp51. The segment at residues 131–230 (SPTLEVDALV…LRGRGYLMVS (100 aa)) is a DNA-binding region (ompR/PhoB-type).

Post-translationally, phosphorylated by CpxA.

It localises to the cytoplasm. Functionally, member of the two-component regulatory system CpxA/CpxR. This system combats a variety of extracytoplasmic protein-mediated toxicities. It performs this function by increasing the synthesis of the periplasmic protease, DegP as well as that of CpxP protein. The polypeptide is Transcriptional regulatory protein CpxR (cpxR) (Escherichia coli O157:H7).